A 150-amino-acid polypeptide reads, in one-letter code: Large ribosomal subunit protein bL9 (150 aa).

Belongs to the bacterial ribosomal protein bL9 family.

In terms of biological role, binds to the 23S rRNA. The chain is Large ribosomal subunit protein bL9 from Shewanella baltica (strain OS155 / ATCC BAA-1091).